The following is a 387-amino-acid chain: Beta-citrylglutamate synthase B (387 aa).

Residues 119-304 enclose the ATP-grasp domain; sequence FQELAGHGVP…VAGIIADYAA (186 aa). Residues Lys158, 193 to 203, and Arg219 contribute to the ATP site; that span reads QKYIKESHGRD. Mg(2+)-binding residues include Asp264, Glu277, and Asn279. Mn(2+)-binding residues include Asp264, Glu277, and Asn279. The interval 325 to 361 is disordered; it reads ASETSEPELGPPASAAVDNMSASSSSVDSDPESTTER. The segment covering 337 to 352 has biased composition (low complexity); sequence ASAAVDNMSASSSSVD.

This sequence belongs to the RimK family. It depends on Mg(2+) as a cofactor. The cofactor is Mn(2+). Strongly expressed in brain and testis. Expressed in eyes, thymus, lung, kidney, skeletal muscle, spleen, skin and heart. Expressed in neurons of the neocortex, the gray matter and Purkinje cells.

Its subcellular location is the cytoplasm. It catalyses the reaction citrate + L-glutamate + ATP = beta-citrylglutamate + ADP + phosphate + H(+). The enzyme catalyses N-acetyl-L-aspartate + L-glutamate + ATP = N-acetyl-L-aspartyl-L-glutamate + ADP + phosphate + H(+). In terms of biological role, catalyzes the synthesis of beta-citryl-L-glutamate and N-acetyl-L-aspartyl-L-glutamate. Beta-citryl-L-glutamate is synthesized more efficiently than N-acetyl-L-aspartyl-L-glutamate. The protein is Beta-citrylglutamate synthase B (Rimklb) of Mus musculus (Mouse).